The sequence spans 473 residues: Heavy metal-associated isoprenylated plant protein 32 (473 aa).

Residues 9–72 (IQTCVLKVNI…KLAKSGKHAE (64 aa)) form the HMA domain. A metal cation-binding residues include cysteine 20 and cysteine 23. 3 disordered regions span residues 96-139 (QIDH…KMGQ), 162-230 (KLPP…PNMT), and 246-343 (ANLA…QNMS). The segment covering 118–131 (KNGGGGGGGGGGGN) has biased composition (gly residues). Over residues 187–217 (PEDDDDDDFSDEFDDEFTDDDDDEFDDEFDD) the composition is skewed to acidic residues. The span at 253–339 (AKNGGKGAPA…GFRPMGGGGP (87 aa)) shows a compositional bias: gly residues. The residue at position 470 (cysteine 470) is a Cysteine methyl ester. A lipid anchor (S-farnesyl cysteine) is attached at cysteine 470. A propeptide spans 471–473 (DIM) (removed in mature form).

Belongs to the HIPP family.

Its function is as follows. Heavy-metal-binding protein. The protein is Heavy metal-associated isoprenylated plant protein 32 of Arabidopsis thaliana (Mouse-ear cress).